The chain runs to 507 residues: Hexokinase-5 (507 aa).

A helical membrane pass occupies residues 4 to 24 (AAAVGTAVVVAAAVGVAVVLA). A Hexokinase domain is found at 44–498 (RKVAAVIEDV…SGIGAALLAA (455 aa)). Positions 99 to 237 (TGNEQGLFYA…GLDMKIAALV (139 aa)) are hexokinase small subdomain. Glycine 113, threonine 114, and asparagine 115 together coordinate ADP. D-glucose-binding residues include threonine 203, lysine 204, asparagine 238, and aspartate 239. The hexokinase large subdomain stretch occupies residues 238–487 (NDTVGTLAGG…SSVVTKLAND (250 aa)). Residue threonine 262 coordinates ADP. Positions 265, 293, and 324 each coordinate D-glucose. Residue glycine 452 coordinates ADP.

It belongs to the hexokinase family. As to expression, expressed in roots, leaves, flowers, immature seeds, endosperm and seed coat.

Its subcellular location is the plastid. It is found in the chloroplast outer membrane. It carries out the reaction a D-hexose + ATP = a D-hexose 6-phosphate + ADP + H(+). It catalyses the reaction D-fructose + ATP = D-fructose 6-phosphate + ADP + H(+). The enzyme catalyses D-glucose + ATP = D-glucose 6-phosphate + ADP + H(+). The protein operates within carbohydrate metabolism; hexose metabolism. It participates in carbohydrate degradation; glycolysis; D-glyceraldehyde 3-phosphate and glycerone phosphate from D-glucose: step 1/4. Functionally, fructose and glucose phosphorylating enzyme. Functions as a glucose sensor for plant growth and photosynthesis. Is essential for pollen development, germination, and tube growth. Its activity is necessary for the starch utilization pathway during pollen germination and tube growth, as well as for starch biosynthesis during pollen maturation. The polypeptide is Hexokinase-5 (HXK5) (Oryza sativa subsp. japonica (Rice)).